The sequence spans 494 residues: UDP-N-acetylmuramoyl-L-alanyl-D-glutamate--L-lysine ligase (494 aa).

S30 provides a ligand contact to UDP-N-acetyl-alpha-D-muramoyl-L-alanyl-D-glutamate. G110–S116 is an ATP binding site. Residues T152 to T153, S179, and R187 each bind UDP-N-acetyl-alpha-D-muramoyl-L-alanyl-D-glutamate. K219 bears the N6-carboxylysine mark. The short motif at D406 to A409 is the L-lysine recognition motif element.

It belongs to the MurCDEF family. MurE subfamily. Post-translationally, carboxylation is probably crucial for Mg(2+) binding and, consequently, for the gamma-phosphate positioning of ATP.

It is found in the cytoplasm. The enzyme catalyses UDP-N-acetyl-alpha-D-muramoyl-L-alanyl-D-glutamate + L-lysine + ATP = UDP-N-acetyl-alpha-D-muramoyl-L-alanyl-gamma-D-glutamyl-L-lysine + ADP + phosphate + H(+). Its pathway is cell wall biogenesis; peptidoglycan biosynthesis. Its function is as follows. Catalyzes the addition of L-lysine to the nucleotide precursor UDP-N-acetylmuramoyl-L-alanyl-D-glutamate (UMAG) in the biosynthesis of bacterial cell-wall peptidoglycan. This Staphylococcus epidermidis (strain ATCC 35984 / DSM 28319 / BCRC 17069 / CCUG 31568 / BM 3577 / RP62A) protein is UDP-N-acetylmuramoyl-L-alanyl-D-glutamate--L-lysine ligase.